A 292-amino-acid polypeptide reads, in one-letter code: Phosphatidylserine decarboxylase proenzyme (292 aa).

Residues Asp89, His146, and Ser252 each act as charge relay system; for autoendoproteolytic cleavage activity in the active site. Residue Ser252 is the Schiff-base intermediate with substrate; via pyruvic acid; for decarboxylase activity of the active site. Pyruvic acid (Ser); by autocatalysis is present on Ser252.

This sequence belongs to the phosphatidylserine decarboxylase family. PSD-B subfamily. Prokaryotic type I sub-subfamily. In terms of assembly, heterodimer of a large membrane-associated beta subunit and a small pyruvoyl-containing alpha subunit. It depends on pyruvate as a cofactor. Is synthesized initially as an inactive proenzyme. Formation of the active enzyme involves a self-maturation process in which the active site pyruvoyl group is generated from an internal serine residue via an autocatalytic post-translational modification. Two non-identical subunits are generated from the proenzyme in this reaction, and the pyruvate is formed at the N-terminus of the alpha chain, which is derived from the carboxyl end of the proenzyme. The autoendoproteolytic cleavage occurs by a canonical serine protease mechanism, in which the side chain hydroxyl group of the serine supplies its oxygen atom to form the C-terminus of the beta chain, while the remainder of the serine residue undergoes an oxidative deamination to produce ammonia and the pyruvoyl prosthetic group on the alpha chain. During this reaction, the Ser that is part of the protease active site of the proenzyme becomes the pyruvoyl prosthetic group, which constitutes an essential element of the active site of the mature decarboxylase.

The protein resides in the cell membrane. The enzyme catalyses a 1,2-diacyl-sn-glycero-3-phospho-L-serine + H(+) = a 1,2-diacyl-sn-glycero-3-phosphoethanolamine + CO2. It functions in the pathway phospholipid metabolism; phosphatidylethanolamine biosynthesis; phosphatidylethanolamine from CDP-diacylglycerol: step 2/2. In terms of biological role, catalyzes the formation of phosphatidylethanolamine (PtdEtn) from phosphatidylserine (PtdSer). This Shewanella baltica (strain OS185) protein is Phosphatidylserine decarboxylase proenzyme.